The sequence spans 298 residues: Acetylglutamate kinase (298 aa).

Substrate-binding positions include 69-70 (GG), arginine 91, and asparagine 196.

It belongs to the acetylglutamate kinase family. ArgB subfamily.

The protein resides in the cytoplasm. The enzyme catalyses N-acetyl-L-glutamate + ATP = N-acetyl-L-glutamyl 5-phosphate + ADP. The protein operates within amino-acid biosynthesis; L-arginine biosynthesis; N(2)-acetyl-L-ornithine from L-glutamate: step 2/4. Its function is as follows. Catalyzes the ATP-dependent phosphorylation of N-acetyl-L-glutamate. This chain is Acetylglutamate kinase, found in Granulibacter bethesdensis (strain ATCC BAA-1260 / CGDNIH1).